A 525-amino-acid polypeptide reads, in one-letter code: MQPKVPQLRRREGLGEEQEKGARGGEGNARTHGTPDLVQWTRHMEAVKTQFLEQAQRELAELLDRALWEAMQAYPKQDRPLPSAAPDSTSKTQELHPGKRKVFITRKSLIDELMEVQHFRTIYHMFIAGLCVLIISTLAIDFIDEGRLMLEFDLLLFSFGQLPLALMTWVPMFLSTLLVPYQTLWLWARPRAGGAWMLGASLGCVLLAAHAVVLCVLPVHVSVRHELPPASRCVLVFEQVRLLMKSYSFLRETVPGIFCVRGGKGISPPSFSSYLYFLFCPTLIYRETYPRTPSIRWNYVAKNFAQVLGCLLYACFILGRLCVPVFANMSREPFSTRALLLSILHATGPGIFMLLLIFFAFLHCWLNAFAEMLRFGDRMFYRDWWNSTSFSNYYRTWNVVVHDWLYSYVYQDGLWLLGRRARGVAMLGVFLVSAVVHEYIFCFVLGFFYPVMLMLFLVFGGLLNFTMNDRHTGPAWNILMWTFLFMGQGIQVSLYCQEWYARRHCPLPQTTFWGMVTPRSWSCHP.

Disordered stretches follow at residues 1-34 (MQPK…THGT) and 77-97 (QDRP…ELHP). At 1 to 119 (MQPKVPQLRR…IDELMEVQHF (119 aa)) the chain is on the cytoplasmic side. Basic and acidic residues predominate over residues 9–23 (RRREGLGEEQEKGAR). His118 is a cholesterol binding site. A helical membrane pass occupies residues 120-141 (RTIYHMFIAGLCVLIISTLAID). Residues 142–161 (FIDEGRLMLEFDLLLFSFGQ) lie on the Lumenal side of the membrane. The chain crosses the membrane as a helical span at residues 162–187 (LPLALMTWVPMFLSTLLVPYQTLWLW). Topologically, residues 188–199 (ARPRAGGAWMLG) are cytoplasmic. A helical membrane pass occupies residues 200-223 (ASLGCVLLAAHAVVLCVLPVHVSV). The Lumenal portion of the chain corresponds to 224-231 (RHELPPAS). A helical transmembrane segment spans residues 232–255 (RCVLVFEQVRLLMKSYSFLRETVP). The Cytoplasmic portion of the chain corresponds to 256–296 (GIFCVRGGKGISPPSFSSYLYFLFCPTLIYRETYPRTPSIR). Cysteine sulfenic acid (-SOH); alternate is present on Cys280. Cys280 participates in a covalent cross-link: Glycyl cysteine thioester (Cys-Gly) (interchain with G-Cter in ubiquitin); alternate. A helical membrane pass occupies residues 297–329 (WNYVAKNFAQVLGCLLYACFILGRLCVPVFANM). The Lumenal segment spans residues 330–346 (SREPFSTRALLLSILHA). The helical transmembrane segment at 347-372 (TGPGIFMLLLIFFAFLHCWLNAFAEM) threads the bilayer. Residues 373-420 (LRFGDRMFYRDWWNSTSFSNYYRTWNVVVHDWLYSYVYQDGLWLLGRR) are Cytoplasmic-facing. An FYXDWWN motif motif is present at residues 380 to 386 (FYRDWWN). An acyl-CoA-binding residues include Asn392, Arg395, Asn398, His402, Tyr410, and Ser433. Residues 421–445 (ARGVAMLGVFLVSAVVHEYIFCFVL) traverse the membrane as a helical segment. The active site involves His437. At 446-451 (GFFYPV) the chain is on the lumenal side. The helical transmembrane segment at 452-467 (MLMLFLVFGGLLNFTM) threads the bilayer. The Cytoplasmic segment spans residues 468 to 473 (NDRHTG). A helical transmembrane segment spans residues 474–505 (PAWNILMWTFLFMGQGIQVSLYCQEWYARRHC). Residues 506-525 (PLPQTTFWGMVTPRSWSCHP) are Lumenal-facing.

It belongs to the membrane-bound acyltransferase family. Sterol o-acyltransferase subfamily. May form homo- or heterodimers. Interacts with INSIG1; the interaction is direct and promotes association with AMFR/gp78. Polyubiquitinated by AMFR/gp78 at Cys-280, leading to its degradation when the lipid levels are low. Association with AMFR/gp78 is mediated via interaction with INSIG1. High concentration of cholesterol and fatty acid results in Cys-280 oxidation, preventing ubiquitination at the same site, resulting in protein stabilization. Post-translationally, oxidized at Cys-280: high concentration of cholesterol and fatty acid induce reactive oxygen species, which oxidizes Cys-280, preventing ubiquitination at the same site, and resulting in protein stabilization.

It is found in the endoplasmic reticulum membrane. It catalyses the reaction a sterol + a long-chain fatty acyl-CoA = a long-chain 3-hydroxysterol ester + CoA. It carries out the reaction cholesterol + an acyl-CoA = a cholesterol ester + CoA. The enzyme catalyses cholesterol + (9Z)-octadecenoyl-CoA = cholesteryl (9Z-octadecenoate) + CoA. The catalysed reaction is (5Z,8Z,11Z,14Z,17Z)-eicosapentaenoyl-CoA + cholesterol = (5Z,8Z,11Z,14Z,17Z-eicosapentaenoyl)-cholesterol + CoA. It catalyses the reaction (9Z,12Z,15Z)-octadecatrienoyl-CoA + cholesterol = (9Z,12Z,15Z-octadecatrienoyl)-cholesterol + CoA. It carries out the reaction (5Z,8Z,11Z,14Z)-eicosatetraenoyl-CoA + cholesterol = cholesteryl (5Z,8Z,11Z,14Z)-eicosatetraenoate + CoA. Catalyzes the formation of fatty acid-cholesterol esters, which are less soluble in membranes than cholesterol. Plays a role in lipoprotein assembly and dietary cholesterol absorption. Utilizes oleoyl-CoA ((9Z)-octadecenoyl-CoA) and linolenoyl-CoA ((9Z,12Z,15Z)-octadecatrienoyl-CoA) as substrates. May provide cholesteryl esters for lipoprotein secretion from hepatocytes and intestinal mucosa. The sequence is that of Sterol O-acyltransferase 2 from Mus musculus (Mouse).